We begin with the raw amino-acid sequence, 195 residues long: MELSESVQKGFQMLADPRSFDSNAFTLLLRAAFQSLLDAQADEAVLDHPDLKHIDPVVLKHCHAAAATYILEAGKHRADKSTLSTYLEDCKFDRERIELFCTEYQNNKNSLEILLGSIGRSLPHITDVSWRLEYQIKTNQLHRMYRPAYLVTLSVQNTDSPSYPEISFSCSMEQLQDLVGKLKDASKSLERATQL.

In terms of domain architecture, COMM spans 124 to 193 (HITDVSWRLE…DASKSLERAT (70 aa)).

Belongs to the COMM domain-containing protein 3 family. As to quaternary structure, component of the commander complex consisting of the CCC subcomplex and the retriever subcomplex. Component of the CCC (COMMD/CCDC22/CCDC93) subcomplex consisting of COMMD1, COMMD2, COMMD3, COMMD4, COMMD5, COMMD6, COMMD7, COMMD8, COMMD9, COMMD10, CCDC22 and CCDC93; within the complex forms a heterodimer with COMMD2. Interacts with NFKB1/p105. Interacts with CCDC22, CCDC93, SCNN1B, CUL3, CUL4A, CUL4B, CUL5. As to expression, widely expressed with highest expression in thymus.

The protein localises to the cytoplasm. The protein resides in the nucleus. Its function is as follows. Scaffold protein in the commander complex that is essential for endosomal recycling of transmembrane cargos; the commander complex is composed of the CCC subcomplex and the retriever subcomplex. May modulate activity of cullin-RING E3 ubiquitin ligase (CRL) complexes. May down-regulate activation of NF-kappa-B. Modulates Na(+) transport in epithelial cells by regulation of apical cell surface expression of amiloride-sensitive sodium channel (ENaC) subunits. The polypeptide is COMM domain-containing protein 3 (COMMD3) (Homo sapiens (Human)).